The following is a 404-amino-acid chain: Druantia protein DruA (404 aa).

The protein resides in the cytoplasm. In terms of biological role, component of antiviral defense system Druantia type I, composed of DruA, DruB, DruC, DruD and DruE. Expression of Druantia in E.coli (strain MG1655) confers resistance to phage lambda, SECphi18, SECphi27 and T4. This is Druantia protein DruA from Escherichia coli (strain UMEA 4076-1).